The following is a 163-amino-acid chain: Protein-export protein SecB (163 aa).

The protein belongs to the SecB family. As to quaternary structure, homotetramer, a dimer of dimers. One homotetramer interacts with 1 SecA dimer.

The protein localises to the cytoplasm. Functionally, one of the proteins required for the normal export of preproteins out of the cell cytoplasm. It is a molecular chaperone that binds to a subset of precursor proteins, maintaining them in a translocation-competent state. It also specifically binds to its receptor SecA. The sequence is that of Protein-export protein SecB from Burkholderia cenocepacia (strain ATCC BAA-245 / DSM 16553 / LMG 16656 / NCTC 13227 / J2315 / CF5610) (Burkholderia cepacia (strain J2315)).